Here is a 323-residue protein sequence, read N- to C-terminus: MKNFAYLNGPKVVVIGGGTGLSTMLRGLKKYTHNITAIVTVADDGGGSGVLREDLGMLPPGDIRNCILALRNTEPTMEKLLQYRFTDGMLKGQSFGNLFLAAMNGISISFEEAVKKMSEVLAVSGKVLPVTLDDVKLKAKLKNGIVIDGESLIPKLQMKEKSPIERIFLEPKDAKPVKEALIDIMDADEIILGPGSLYTSIIPNLLVNDVCEAIEDSKAIKVYVCNIMTQPGETIGYDANAHVDALFLHGLKSLDYVIVNNGEIPYEYKDRYKEDMSQPVSYDVESFKQKGIKVIEKDVLAIRNNYIRHDEQKLAEILMGLLE.

Belongs to the gluconeogenesis factor family.

It localises to the cytoplasm. In terms of biological role, required for morphogenesis under gluconeogenic growth conditions. This Thermoanaerobacterium thermosulfurigenes (Clostridium thermosulfurogenes) protein is Putative gluconeogenesis factor.